Here is a 190-residue protein sequence, read N- to C-terminus: NPTLYGELAKGQSPKFLVFACSDSRVCPSHILDFQPGEAFVVRNIANMVPPYDTIKHSGAGAAIEYAVLHLKVENIVVIGHSCCGGIKGLMSIPDDGTPASDFIEQWVKLGLPAKSKVKANCNNLEFADLCTKCEKEAVNVSLGNLLTYPFVRDALVNKKLSLKGAHYDFVNGAFDLWNLDFGISPSLLQ.

The protein belongs to the beta-class carbonic anhydrase family. In terms of assembly, homohexamer.

The protein localises to the cytoplasm. It catalyses the reaction hydrogencarbonate + H(+) = CO2 + H2O. Functionally, reversible hydration of carbon dioxide. This chain is Carbonic anhydrase 2, found in Flaveria linearis (Narrowleaf yellowtops).